The primary structure comprises 304 residues: Sulfate adenylyltransferase subunit 2 (304 aa).

Belongs to the PAPS reductase family. CysD subfamily. As to quaternary structure, heterodimer composed of CysD, the smaller subunit, and CysNC.

The catalysed reaction is sulfate + ATP + H(+) = adenosine 5'-phosphosulfate + diphosphate. Its pathway is sulfur metabolism; hydrogen sulfide biosynthesis; sulfite from sulfate: step 1/3. Functionally, with CysN forms the ATP sulfurylase (ATPS) that catalyzes the adenylation of sulfate producing adenosine 5'-phosphosulfate (APS) and diphosphate, the first enzymatic step in sulfur assimilation pathway. APS synthesis involves the formation of a high-energy phosphoric-sulfuric acid anhydride bond driven by GTP hydrolysis by CysN coupled to ATP hydrolysis by CysD. This Xylella fastidiosa (strain Temecula1 / ATCC 700964) protein is Sulfate adenylyltransferase subunit 2.